A 507-amino-acid chain; its full sequence is Cytochrome P450 7B1 (507 aa).

Helical transmembrane passes span 14–34 (PLAL…LFLL), 178–198 (IFAF…YGKI), and 287–307 (FLWA…YYIL). C447 provides a ligand contact to heme.

Belongs to the cytochrome P450 family. Requires heme as cofactor. As to expression, highly expressed in brain structures including the corpus callosum, the anterior commissure and fornix. The hippocampal expression is particularly prominent in the dentate gyrus. Expressed in liver and kidney. The hepatic expression is sexually dimorphic, predominantly detected in male liver while barely detectable in females. Expressed in lymph nodes and spleens, in both lymphoid and stromal compartments. Higher expression is detected in fibroblastic reticular cells, a type of stromal cells in the lymph nodes. Also expressed at high levels in the outer follicle and at the B cell-T cell boundary of splenic germinal centers. Expressed in dendritic cells (DCs) subpopulations being most abundant in CD8-positive DCs.

It is found in the endoplasmic reticulum membrane. The protein resides in the microsome membrane. The enzyme catalyses 25-hydroxycholesterol + reduced [NADPH--hemoprotein reductase] + O2 = 7alpha,25-dihydroxycholesterol + oxidized [NADPH--hemoprotein reductase] + H2O + H(+). It carries out the reaction (25R)-cholest-5-ene-3beta,26-diol + reduced [NADPH--hemoprotein reductase] + O2 = (25R)-cholest-5-en-3beta,7alpha,26-triol + oxidized [NADPH--hemoprotein reductase] + H2O + H(+). The catalysed reaction is (24S)-hydroxycholesterol + reduced [NADPH--hemoprotein reductase] + O2 = (24S)-7alpha-dihydroxycholesterol + oxidized [NADPH--hemoprotein reductase] + H2O + H(+). It catalyses the reaction (24S)-25-epoxycholesterol + reduced [NADPH--hemoprotein reductase] + O2 = (24S,25)-epoxy-7alpha-hydroxycholesterol + oxidized [NADPH--hemoprotein reductase] + H2O + H(+). The enzyme catalyses (22R)-hydroxycholesterol + reduced [NADPH--hemoprotein reductase] + O2 = (22R,7alpha)-dihydroxycholesterol + oxidized [NADPH--hemoprotein reductase] + H2O + H(+). It carries out the reaction androst-5-en-3beta,17beta-diol + reduced [NADPH--hemoprotein reductase] + O2 = androst-5-en-3beta,7alpha,17beta-triol + oxidized [NADPH--hemoprotein reductase] + H2O + H(+). The catalysed reaction is 5alpha-androstane-3beta,17beta-diol + reduced [NADPH--hemoprotein reductase] + O2 = 5alpha-androstane-3beta,6alpha,17beta-triol + oxidized [NADPH--hemoprotein reductase] + H2O + H(+). It catalyses the reaction 3beta-hydroxyandrost-5-en-17-one + reduced [NADPH--hemoprotein reductase] + O2 = 3beta,7alpha-dihydroxyandrost-5-en-17-one + oxidized [NADPH--hemoprotein reductase] + H2O + H(+). The enzyme catalyses 3beta-hydroxy-5alpha-androstan-17-one + reduced [NADPH--hemoprotein reductase] + O2 = 3beta,7alpha-dihydroxy-5alpha-androstan-17-one + oxidized [NADPH--hemoprotein reductase] + H2O + H(+). It carries out the reaction pregnenolone + reduced [NADPH--hemoprotein reductase] + O2 = 7alpha-hydroxypregnenolone + oxidized [NADPH--hemoprotein reductase] + H2O + H(+). It participates in lipid metabolism; bile acid biosynthesis. It functions in the pathway steroid hormone biosynthesis. Its activity is regulated as follows. Inhibited by drugs voriconazole and metyrapone. A cytochrome P450 monooxygenase involved in the metabolism of endogenous oxysterols and steroid hormones, including neurosteroids. Mechanistically, uses molecular oxygen inserting one oxygen atom into a substrate, and reducing the second into a water molecule, with two electrons provided by NADPH via cytochrome P450 reductase (CPR; NADPH-ferrihemoprotein reductase). Catalyzes the hydroxylation of carbon hydrogen bonds of steroids with a preference for 7-alpha position. Usually metabolizes steroids carrying a hydroxy group at position 3, functioning as a 3-hydroxy steroid 7-alpha hydroxylase. Hydroxylates oxysterols, including 25-hydroxycholesterol and (25R)-cholest-5-ene-3beta,26-diol toward 7-alpha hydroxy derivatives, which may be transported to the liver and converted to bile acids. Via its product 7-alpha,25-dihydroxycholesterol, a ligand for the chemotactic G protein-coupled receptor GPR183/EBI2, regulates B cell migration in germinal centers of lymphoid organs, thus guiding efficient maturation of plasma B cells and overall antigen-specific humoral immune response. 7-alpha hydroxylates neurosteroids, including 3beta-hydroxyandrost-5-en-17-one (dehydroepiandrosterone) and pregnenolone, both involved in hippocampus-associated memory and learning. Metabolizes androstanoids toward 6- or 7-alpha hydroxy derivatives. This chain is Cytochrome P450 7B1, found in Mus musculus (Mouse).